A 478-amino-acid chain; its full sequence is H(+)/Cl(-) exchange transporter ClcA (478 aa).

Residues 1–32 (MTHSTQQLSPEGVAEGKRGRLIRELVNRDKTP) lie on the Cytoplasmic side of the membrane. Residues 33 to 69 (LIILIMAAVVGVVTGLLGVAFDRGVDWVQQQRLLALA) form a helical membrane-spanning segment. Topologically, residues 70-76 (NVADSAL) are periplasmic. The chain crosses the membrane as a helical span at residues 77–100 (LVWPLAFIMSALLAMMGYFLVSRF). The short motif at 106-110 (GSGIP) is the Selectivity filter part_1 element. Position 107 (Ser107) interacts with chloride. The segment at residues 109-116 (IPEIEGAM) is an intramembrane region (helical). The Cytoplasmic portion of the chain corresponds to 117-123 (EEMRPVR). The next 2 membrane-spanning stretches (helical) occupy residues 124–141 (WWRVIPVKFIGGLGTLGA) and 148–166 (EGPMVQMGGNSGRMIVDIF). The short motif at 146–150 (GREGP) is the Selectivity filter part_2 element. Topologically, residues 167-176 (RLRSPEARHS) are cytoplasmic. Intramembrane regions (helical) lie at residues 177-189 (LLATGAAAGLSAA) and 193-201 (PLAGILFVI). Residues 202–214 (EEMRSQFRYSLVS) lie on the Cytoplasmic side of the membrane. The helical transmembrane segment at 215 to 232 (IKAVFIGVITSTIVYRYF) threads the bilayer. The Periplasmic segment spans residues 233-252 (NGERAIIEVGKLSDAPLNTL). A helical membrane pass occupies residues 253–281 (WLYLLLGIIFGAVGVIFNALIFRTQDMFV). At 282-287 (RFHGGD) the chain is on the cytoplasmic side. The helical transmembrane segment at 288–309 (WRKLVLIGGLLGGMCGLLALLH) threads the bilayer. Residues 310–329 (GNAVGGGFALIPIAAAGNFS) lie on the Periplasmic side of the membrane. Helical transmembrane passes span 330 to 349 (IGMLLFIFIARVITTLLCFG) and 355 to 376 (GIFAPMLALGTILGTAFGLSCA). The Selectivity filter part_3 motif lies at 355 to 359 (GIFAP). Chloride is bound by residues Ile356 and Phe357. The Periplasmic segment spans residues 377–386 (HFFPQYGIEA). The segment at residues 387–401 (GTFAIAGMGALFAAS) is an intramembrane region (helical). An intramembrane region (note=Loop between two helices) is located at residues 402–404 (VRA). The helical intramembrane region spans 405–416 (PLTGIVLVLEMT). An intramembrane region (note=Loop between two helices) is located at residues 417–421 (DNYQL). The chain crosses the membrane as a helical span at residues 422-438 (ILPMIVTCLGATLIAQF). Residues 439–478 (MGGKPLYSAILARTLAKQEQARATVIAQEPAVENTPQTGR) are Cytoplasmic-facing. Residue Tyr445 coordinates chloride.

The protein belongs to the chloride channel (TC 2.A.49) family. ClcA subfamily. Homodimer.

It is found in the cell inner membrane. It carries out the reaction 2 chloride(in) + H(+)(out) = 2 chloride(out) + H(+)(in). Proton-coupled chloride transporter. Functions as antiport system and exchanges two chloride ions for 1 proton. Probably acts as an electrical shunt for an outwardly-directed proton pump that is linked to amino acid decarboxylation, as part of the extreme acid resistance (XAR) response. In Yersinia pseudotuberculosis serotype IB (strain PB1/+), this protein is H(+)/Cl(-) exchange transporter ClcA.